The chain runs to 118 residues: UPF0102 protein ROP_66030 (118 aa).

It belongs to the UPF0102 family.

In Rhodococcus opacus (strain B4), this protein is UPF0102 protein ROP_66030.